Reading from the N-terminus, the 328-residue chain is Glycerol-3-phosphate dehydrogenase [NAD(P)+] (328 aa).

Residues W15, R35, and K108 each coordinate NADPH. Residues K108, G136, and S138 each contribute to the sn-glycerol 3-phosphate site. Residue A140 coordinates NADPH. K191, D244, S254, R255, and N256 together coordinate sn-glycerol 3-phosphate. K191 (proton acceptor) is an active-site residue. R255 lines the NADPH pocket. NADPH contacts are provided by L275 and E277.

This sequence belongs to the NAD-dependent glycerol-3-phosphate dehydrogenase family.

Its subcellular location is the cytoplasm. The enzyme catalyses sn-glycerol 3-phosphate + NAD(+) = dihydroxyacetone phosphate + NADH + H(+). It catalyses the reaction sn-glycerol 3-phosphate + NADP(+) = dihydroxyacetone phosphate + NADPH + H(+). It functions in the pathway membrane lipid metabolism; glycerophospholipid metabolism. In terms of biological role, catalyzes the reduction of the glycolytic intermediate dihydroxyacetone phosphate (DHAP) to sn-glycerol 3-phosphate (G3P), the key precursor for phospholipid synthesis. In Azorhizobium caulinodans (strain ATCC 43989 / DSM 5975 / JCM 20966 / LMG 6465 / NBRC 14845 / NCIMB 13405 / ORS 571), this protein is Glycerol-3-phosphate dehydrogenase [NAD(P)+].